A 208-amino-acid polypeptide reads, in one-letter code: Octanoyltransferase (208 aa).

One can recognise a BPL/LPL catalytic domain in the interval 29–208 (KTQDELVWLL…KEFNKVFCNC (180 aa)). Substrate contacts are provided by residues 68–75 (RGGKYTYH), 140–142 (AFG), and 153–155 (GVS). Residue Cys171 is the Acyl-thioester intermediate of the active site.

Belongs to the LipB family.

It localises to the cytoplasm. The enzyme catalyses octanoyl-[ACP] + L-lysyl-[protein] = N(6)-octanoyl-L-lysyl-[protein] + holo-[ACP] + H(+). It participates in protein modification; protein lipoylation via endogenous pathway; protein N(6)-(lipoyl)lysine from octanoyl-[acyl-carrier-protein]: step 1/2. Functionally, catalyzes the transfer of endogenously produced octanoic acid from octanoyl-acyl-carrier-protein onto the lipoyl domains of lipoate-dependent enzymes. Lipoyl-ACP can also act as a substrate although octanoyl-ACP is likely to be the physiological substrate. In Ehrlichia ruminantium (strain Gardel), this protein is Octanoyltransferase.